The following is a 221-amino-acid chain: Lipoprotein-releasing system ATP-binding protein LolD (221 aa).

Positions 6 to 220 (LILKNISKHY…YKLKHGLLNI (215 aa)) constitute an ABC transporter domain. ATP is bound at residue 42 to 49 (GSSGSGKS).

Belongs to the ABC transporter superfamily. Lipoprotein translocase (TC 3.A.1.125) family. As to quaternary structure, the complex is composed of two ATP-binding proteins (LolD) and two transmembrane proteins (LolC and LolE).

The protein localises to the cell inner membrane. Its function is as follows. Part of the ABC transporter complex LolCDE involved in the translocation of mature outer membrane-directed lipoproteins, from the inner membrane to the periplasmic chaperone, LolA. Responsible for the formation of the LolA-lipoprotein complex in an ATP-dependent manner. This chain is Lipoprotein-releasing system ATP-binding protein LolD, found in Rickettsia felis (strain ATCC VR-1525 / URRWXCal2) (Rickettsia azadi).